The sequence spans 422 residues: Gamma-glutamyl phosphate reductase (422 aa).

It belongs to the gamma-glutamyl phosphate reductase family.

Its subcellular location is the cytoplasm. It catalyses the reaction L-glutamate 5-semialdehyde + phosphate + NADP(+) = L-glutamyl 5-phosphate + NADPH + H(+). The protein operates within amino-acid biosynthesis; L-proline biosynthesis; L-glutamate 5-semialdehyde from L-glutamate: step 2/2. Its function is as follows. Catalyzes the NADPH-dependent reduction of L-glutamate 5-phosphate into L-glutamate 5-semialdehyde and phosphate. The product spontaneously undergoes cyclization to form 1-pyrroline-5-carboxylate. This Nitrosomonas europaea (strain ATCC 19718 / CIP 103999 / KCTC 2705 / NBRC 14298) protein is Gamma-glutamyl phosphate reductase.